A 437-amino-acid polypeptide reads, in one-letter code: Isthmin-2 (437 aa).

The N-terminal stretch at 1 to 25 (MLRARKGLWVLLSVLLAFWIERAIS) is a signal peptide. The tract at residues 156-191 (DSGEDGTGQAEDEEDDYDYDSGEPIPSGLGKTDGDW) is disordered. The segment covering 165-176 (AEDEEDDYDYDS) has biased composition (acidic residues). Positions 197-242 (EEKEEEWSTWSPCSVTCGHGNQTRSRSCGDFCTSTESQSCDLVPCP) constitute a TSP type-1 domain. 3 disulfides stabilise this stretch: cysteine 209/cysteine 236, cysteine 213/cysteine 241, and cysteine 224/cysteine 228. Asparagine 217 carries N-linked (GlcNAc...) asparagine glycosylation. Residues asparagine 258 and asparagine 349 are each glycosylated (N-linked (GlcNAc...) asparagine). Residues 262–425 (PYGTDVGSCE…LHCMENPQQD (164 aa)) enclose the AMOP domain.

It belongs to the isthmin family.

It is found in the secreted. This Danio rerio (Zebrafish) protein is Isthmin-2 (ism2).